The chain runs to 436 residues: Bifunctional IPC transferase and DIPP synthase (436 aa).

The mobA-like NTP transferase stretch occupies residues 11–241 (GVGAAVLAAG…LSEEMVLGWA (231 aa)). Residues 17 to 19 (LAA) and Lys-32 contribute to the CTP site. A CDP-alcohol phosphatidyltransferases region spans residues 242-435 (ASGNDGPVSR…RRLLALKRGR (194 aa)). The next 3 membrane-spanning stretches (helical) occupy residues 275–295 (VSLLSFALAALGAGLLAAGRL), 349–371 (AGTRLAAAAGYPALAGALLVSYT), and 397–417 (LAVLALGGLLGAPGAALLATG).

The protein in the N-terminal section; belongs to the MobA family. In the C-terminal section; belongs to the CDP-alcohol phosphatidyltransferase class-I family.

Its subcellular location is the membrane. The catalysed reaction is 1D-myo-inositol 3-phosphate + CTP + H(+) = CDP-1L-myo-inositol + diphosphate. The enzyme catalyses CDP-1L-myo-inositol + 1D-myo-inositol 3-phosphate = bis(1L-myo-inositol) 3,1'-phosphate 1-phosphate + CMP + H(+). Its function is as follows. Involved in biosynthesis of di-myo-inositol phosphate (DIP), a widespread organic solute in microorganisms adapted to hot environments. Catalyzes the condensation of CTP and L-myo-inositol-1-phosphate into CDP-L-myo-inositol, as well as the biosynthesis of di-myo-inositol-1,3'-phosphate-1'-phosphate (DIPP) from CDP-L-myo-inositol and L-myo-inositol-1-phosphate. In Rubrobacter xylanophilus (strain DSM 9941 / JCM 11954 / NBRC 16129 / PRD-1), this protein is Bifunctional IPC transferase and DIPP synthase.